The following is a 271-amino-acid chain: MGHAARPGRFFGVYLLYCQNPRHRGRVYVGFTVNPARRVRQHNAGRKKGGAWRTSGRGPWDMVLILHGFPSAVAALRFEWAWQHPQASRRLTHVGPRLRSEASFTFHLRVLAHMLRVPPWVRLPLTVRWLRPDFRHELCPAPPPHMPIAFGPPPPQPLVPKRPAASEADSERRLDLGAKASCTLCARMLQDEEGPLCCPHPGCPLRAHIICLAEEFLQEEPGQLLPLEGHCPSCKKSLLWGNLVGQCHEDTEEEEVDLELEEEHWTDLLET.

The 86-residue stretch at 9-94 (RFFGVYLLYC…PQASRRLTHV (86 aa)) folds into the GIY-YIG domain. The segment at 182-234 (CTLCARMLQDEEGPLCCPHPGCPLRAHIICLAEEFLQEEPGQLLPLEGHCPSC) adopts an SLX1-type zinc-finger fold.

This sequence belongs to the SLX1 family. In terms of assembly, forms a heterodimer with SLX4. Requires a divalent metal cation as cofactor.

It is found in the nucleus. Its function is as follows. Catalytic subunit of the SLX1-SLX4 structure-specific endonuclease that resolves DNA secondary structures generated during DNA repair and recombination. Has endonuclease activity towards branched DNA substrates, introducing single-strand cuts in duplex DNA close to junctions with ss-DNA. Has a preference for 5'-flap structures, and promotes symmetrical cleavage of static and migrating Holliday junctions (HJs). Resolves HJs by generating two pairs of ligatable, nicked duplex products. This Rattus norvegicus (Rat) protein is Structure-specific endonuclease subunit SLX1 (Slx1b).